Reading from the N-terminus, the 364-residue chain is UDP-N-acetylglucosamine--N-acetylmuramyl-(pentapeptide) pyrophosphoryl-undecaprenol N-acetylglucosamine transferase (364 aa).

UDP-N-acetyl-alpha-D-glucosamine contacts are provided by residues 13 to 15 (TGG), asparagine 125, arginine 165, serine 192, and glutamine 293.

The protein belongs to the glycosyltransferase 28 family. MurG subfamily.

It is found in the cell inner membrane. It carries out the reaction di-trans,octa-cis-undecaprenyl diphospho-N-acetyl-alpha-D-muramoyl-L-alanyl-D-glutamyl-meso-2,6-diaminopimeloyl-D-alanyl-D-alanine + UDP-N-acetyl-alpha-D-glucosamine = di-trans,octa-cis-undecaprenyl diphospho-[N-acetyl-alpha-D-glucosaminyl-(1-&gt;4)]-N-acetyl-alpha-D-muramoyl-L-alanyl-D-glutamyl-meso-2,6-diaminopimeloyl-D-alanyl-D-alanine + UDP + H(+). It functions in the pathway cell wall biogenesis; peptidoglycan biosynthesis. In terms of biological role, cell wall formation. Catalyzes the transfer of a GlcNAc subunit on undecaprenyl-pyrophosphoryl-MurNAc-pentapeptide (lipid intermediate I) to form undecaprenyl-pyrophosphoryl-MurNAc-(pentapeptide)GlcNAc (lipid intermediate II). The chain is UDP-N-acetylglucosamine--N-acetylmuramyl-(pentapeptide) pyrophosphoryl-undecaprenol N-acetylglucosamine transferase from Cereibacter sphaeroides (strain ATCC 17029 / ATH 2.4.9) (Rhodobacter sphaeroides).